Consider the following 557-residue polypeptide: Chaperonin GroEL 1 (557 aa).

ATP contacts are provided by residues 29 to 32 (TLGP), Lys-50, 86 to 90 (DGTTT), Gly-416, and Asp-495.

It belongs to the chaperonin (HSP60) family. Forms a cylinder of 14 subunits composed of two heptameric rings stacked back-to-back. Interacts with the co-chaperonin GroES.

The protein resides in the cytoplasm. It carries out the reaction ATP + H2O + a folded polypeptide = ADP + phosphate + an unfolded polypeptide.. In terms of biological role, together with its co-chaperonin GroES, plays an essential role in assisting protein folding. The GroEL-GroES system forms a nano-cage that allows encapsulation of the non-native substrate proteins and provides a physical environment optimized to promote and accelerate protein folding. This Protochlamydia amoebophila (strain UWE25) protein is Chaperonin GroEL 1.